Reading from the N-terminus, the 197-residue chain is Phosphoheptose isomerase (197 aa).

An SIS domain is found at 34-192 (MVNALINGNK…CEGVDDCLFP (159 aa)). Substrate is bound by residues 49–51 (NGG), Gln-62, 91–92 (ND), Ser-122, and His-172. Position 62 (Gln-62) interacts with Zn(2+). The Zn(2+) site is built by His-172 and His-180.

It belongs to the SIS family. GmhA subfamily. In terms of assembly, homotetramer. Zn(2+) serves as cofactor.

The protein resides in the cytoplasm. The catalysed reaction is 2 D-sedoheptulose 7-phosphate = D-glycero-alpha-D-manno-heptose 7-phosphate + D-glycero-beta-D-manno-heptose 7-phosphate. Its pathway is carbohydrate biosynthesis; D-glycero-D-manno-heptose 7-phosphate biosynthesis; D-glycero-alpha-D-manno-heptose 7-phosphate and D-glycero-beta-D-manno-heptose 7-phosphate from sedoheptulose 7-phosphate: step 1/1. Functionally, catalyzes the isomerization of sedoheptulose 7-phosphate in D-glycero-D-manno-heptose 7-phosphate. This chain is Phosphoheptose isomerase, found in Pseudoalteromonas atlantica (strain T6c / ATCC BAA-1087).